A 352-amino-acid polypeptide reads, in one-letter code: Ribosome biogenesis protein BRX1 homolog (352 aa).

The interval 1 to 47 is disordered; that stretch reads MAATKRKRRGDLEVQAKKPKKNRKDAGQPAKQADVAKEAEEEKDRIP. Positions 34-46 are enriched in basic and acidic residues; the sequence is DVAKEAEEEKDRI. One can recognise a Brix domain in the interval 59-248; it reads ERILIFSSRG…LIKIFQGSFG (190 aa). Lys-159 participates in a covalent cross-link: Glycyl lysine isopeptide (Lys-Gly) (interchain with G-Cter in SUMO2). At Ser-260 the chain carries Phosphoserine. An N6-acetyllysine modification is found at Lys-275. The disordered stretch occupies residues 281-301; it reads QVKDVQKSRKKEPKTILPHDP. Residues Lys-313 and Lys-321 each participate in a glycyl lysine isopeptide (Lys-Gly) (interchain with G-Cter in SUMO2) cross-link.

It belongs to the BRX1 family.

The protein resides in the nucleus. It is found in the nucleolus. Functionally, required for biogenesis of the 60S ribosomal subunit. In Rattus norvegicus (Rat), this protein is Ribosome biogenesis protein BRX1 homolog (Brix1).